A 333-amino-acid polypeptide reads, in one-letter code: D-2-hydroxyacid dehydrogenase (NAD+) (333 aa).

Residue tyrosine 100 coordinates 4-methyl-2-oxopentanoate. NAD(+)-binding residues include histidine 155, isoleucine 156, aspartate 175, valine 205, asparagine 211, threonine 232, arginine 234, and aspartate 258. Arginine 234 is an active-site residue. Glutamate 263 is a catalytic residue. Histidine 295 serves as a coordination point for 4-methyl-2-oxopentanoate. Histidine 295 (proton donor) is an active-site residue.

This sequence belongs to the D-isomer specific 2-hydroxyacid dehydrogenase family. In terms of assembly, homodimer.

The catalysed reaction is a (2R)-2-hydroxycarboxylate + NAD(+) = a 2-oxocarboxylate + NADH + H(+). It catalyses the reaction (2R)-hydroxy-4-methylpentanoate + NAD(+) = 4-methyl-2-oxopentanoate + NADH + H(+). It carries out the reaction (R)-3-phenyllactate + NAD(+) = 3-phenylpyruvate + NADH + H(+). Its activity is regulated as follows. Completely inhibited In the presence of 0.1 mM Hg(2+). No influence on the activity could be detected with Mg(2+) and Ca(2+) and only very weak effects with Cd(2+), Co(2+) and Mn(2+). Reducing agents and thiol group reagents do not affect catalytic activity. Catalyzes the NADH-dependent reversible reduction of various 2-ketocarboxylic acids to the corresponding D-2-hydroxycarboxylic acids. In vitro can use various substrates, including 4-methyl-2-oxopentanoate (2-oxoisocaproate), 2-oxopentanoate, 2-oxohexanoate and phenylpyruvate. This is D-2-hydroxyacid dehydrogenase (NAD+) from Lacticaseibacillus paracasei (Lactobacillus paracasei).